A 329-amino-acid chain; its full sequence is Phenylalanine--tRNA ligase alpha subunit (329 aa).

Position 253 (glutamate 253) interacts with Mg(2+).

Belongs to the class-II aminoacyl-tRNA synthetase family. Phe-tRNA synthetase alpha subunit type 1 subfamily. In terms of assembly, tetramer of two alpha and two beta subunits. Mg(2+) is required as a cofactor.

It is found in the cytoplasm. It catalyses the reaction tRNA(Phe) + L-phenylalanine + ATP = L-phenylalanyl-tRNA(Phe) + AMP + diphosphate + H(+). This is Phenylalanine--tRNA ligase alpha subunit from Coxiella burnetii (strain CbuK_Q154) (Coxiella burnetii (strain Q154)).